A 455-amino-acid chain; its full sequence is Golgi pH regulator (455 aa).

A run of 4 helical transmembrane segments spans residues 46 to 66, 79 to 99, 111 to 131, and 150 to 170; these read ITFA…LGAL, LYVI…YFVV, LFAC…GDPF, and VGVI…VNCP. N-linked (GlcNAc...) asparagine glycosylation is found at N180 and N243. The next 4 membrane-spanning stretches (helical) occupy residues 290 to 310, 343 to 363, 378 to 398, and 425 to 445; these read GYFF…NIVF, ISFI…LITL, VIVL…VLLM, and WFDV…YLAH.

Belongs to the Golgi pH regulator (TC 1.A.38) family. As to quaternary structure, homotrimer.

It localises to the golgi apparatus membrane. The catalysed reaction is iodide(out) = iodide(in). The enzyme catalyses chloride(in) = chloride(out). It catalyses the reaction bromide(in) = bromide(out). It carries out the reaction fluoride(in) = fluoride(out). Functionally, voltage-gated channel that enables the transfer of anions such as iodide, chloride, bromide and fluoride which may function in counter-ion conductance and participates in Golgi acidification. In Salmo salar (Atlantic salmon), this protein is Golgi pH regulator.